The chain runs to 415 residues: Gamma-glutamyl phosphate reductase (415 aa).

The protein belongs to the gamma-glutamyl phosphate reductase family.

The protein resides in the cytoplasm. The catalysed reaction is L-glutamate 5-semialdehyde + phosphate + NADP(+) = L-glutamyl 5-phosphate + NADPH + H(+). It participates in amino-acid biosynthesis; L-proline biosynthesis; L-glutamate 5-semialdehyde from L-glutamate: step 2/2. Catalyzes the NADPH-dependent reduction of L-glutamate 5-phosphate into L-glutamate 5-semialdehyde and phosphate. The product spontaneously undergoes cyclization to form 1-pyrroline-5-carboxylate. The sequence is that of Gamma-glutamyl phosphate reductase from Bacillus cereus (strain 03BB102).